Reading from the N-terminus, the 394-residue chain is Elongation factor Tu (394 aa).

Residues 10–205 (KPHMNVGTIG…TMDNYFDLPQ (196 aa)) form the tr-type G domain. Residues 19-26 (GHVDHGKT) form a G1 region. 19–26 (GHVDHGKT) is a GTP binding site. Residue Thr26 coordinates Mg(2+). Residues 61–65 (GITIN) are G2. A G3 region spans residues 82–85 (DCPG). GTP-binding positions include 82–86 (DCPGH) and 137–140 (NKLD). The G4 stretch occupies residues 137–140 (NKLD). The tract at residues 173–175 (SAF) is G5.

Belongs to the TRAFAC class translation factor GTPase superfamily. Classic translation factor GTPase family. EF-Tu/EF-1A subfamily. As to quaternary structure, monomer.

It localises to the cytoplasm. The catalysed reaction is GTP + H2O = GDP + phosphate + H(+). In terms of biological role, GTP hydrolase that promotes the GTP-dependent binding of aminoacyl-tRNA to the A-site of ribosomes during protein biosynthesis. The sequence is that of Elongation factor Tu from Borrelia turicatae (strain 91E135).